Here is a 439-residue protein sequence, read N- to C-terminus: Xylose isomerase (439 aa).

Active-site residues include His-103 and Asp-106. The Mg(2+) site is built by Glu-234, Glu-270, His-273, Asp-298, Asp-309, Asp-311, and Asp-341.

The protein belongs to the xylose isomerase family. Homotetramer. Requires Mg(2+) as cofactor.

Its subcellular location is the cytoplasm. It catalyses the reaction alpha-D-xylose = alpha-D-xylulofuranose. This Bacteroides fragilis (strain ATCC 25285 / DSM 2151 / CCUG 4856 / JCM 11019 / LMG 10263 / NCTC 9343 / Onslow / VPI 2553 / EN-2) protein is Xylose isomerase.